A 199-amino-acid chain; its full sequence is Probable GTP-binding protein EngB (199 aa).

One can recognise an EngB-type G domain in the interval 28-199 (DLPEVALAGR…EAWDTILAEL (172 aa)). Residues 36–43 (GRSNVGKS), 63–67 (GKTQL), 81–84 (DVPG), 148–151 (TKAD), and 180–182 (FSS) contribute to the GTP site. Mg(2+)-binding residues include serine 43 and threonine 65.

Belongs to the TRAFAC class TrmE-Era-EngA-EngB-Septin-like GTPase superfamily. EngB GTPase family. Mg(2+) is required as a cofactor.

Its function is as follows. Necessary for normal cell division and for the maintenance of normal septation. The protein is Probable GTP-binding protein EngB of Streptococcus thermophilus (strain CNRZ 1066).